The following is a 530-amino-acid chain: UDP-glucuronosyltransferase 2B15 (530 aa).

The first 23 residues, 1 to 23 (MSLKWTSVFLLIQLSCYFSSGSC), serve as a signal peptide directing secretion. The N-linked (GlcNAc...) asparagine glycan is linked to N65. K136 carries the N6-succinyllysine modification. N316 and N483 each carry an N-linked (GlcNAc...) asparagine glycan. A helical membrane pass occupies residues 495-515 (IAFLLACVATVIFIITKFCLF).

This sequence belongs to the UDP-glycosyltransferase family. In terms of tissue distribution, expressed in many tissues. Present in liver, prostate and testis.

It localises to the endoplasmic reticulum membrane. The enzyme catalyses glucuronate acceptor + UDP-alpha-D-glucuronate = acceptor beta-D-glucuronoside + UDP + H(+). It carries out the reaction 17alpha-estradiol + UDP-alpha-D-glucuronate = 17alpha-estradiol 3-O-(beta-D-glucuronate) + UDP + H(+). It catalyses the reaction 16alpha,17alpha-estriol + UDP-alpha-D-glucuronate = 16alpha,17alpha-estriol 3-O-(beta-D-glucuronate) + UDP + H(+). The catalysed reaction is 17beta-hydroxy-5alpha-androstan-3-one + UDP-alpha-D-glucuronate = 5alpha-dihydrotestosterone 17-O-(beta-D-glucuronate) + UDP + H(+). UDP-glucuronosyltransferase (UGT) that catalyzes phase II biotransformation reactions in which lipophilic substrates are conjugated with glucuronic acid to increase the metabolite's water solubility, thereby facilitating excretion into either the urine or bile. Essential for the elimination and detoxification of drugs, xenobiotics and endogenous compounds. Catalyzes the glucuronidation of endogenous steroid hormones such as androgens (testosterone, androsterone) and estrogens (estradiol, epiestradiol, estriol, catechol estrogens). Displays glucuronidation activity toward several classes of xenobiotic substrates, including phenolic compounds (eugenol, 4-nitrophenol, 4-hydroxybiphenyl) and phenylpropanoids (naringenin, coumarins). Catalyzes the glucuronidation of monoterpenoid alcohols such as borneol, menthol and isomenthol, a class of natural compounds used in essential oils. In Homo sapiens (Human), this protein is UDP-glucuronosyltransferase 2B15.